We begin with the raw amino-acid sequence, 385 residues long: MLVSARVEKQKRVAYQGKATVLALGKALPSNVVSQENLVEEYLREIKCDNLSIKDKLQHLCKSTTVKTRYTVMSRETLHKYPELATEGSPTIKQRLEIANDAVVQMAYEASLVCIKEWGRAVEDITHLVYVSSSEFRLPGGDLYLSAQLGLSNEVQRVMLYFLGCYGGLSGLRVAKDIAENNPGSRVLLTTSETTVLGFRPPNKARPYNLVGAALFGDGAAALIIGADPTESESPFMELHCAMQQFLPQTQGVIDGRLSEEGITFKLGRDLPQKIEDNVEEFCKKLVAKAGSGALELNDLFWAVHPGGPAILSGLETKLKLKPEKLECSRRALMDYGNVSSNTIFYIMDKVRDELEKKGTEGEEWGLGLAFGPGITFEGFLMRNL.

A CoA-binding site is contributed by 56–63 (KLQHLCKS). The Nucleophile role is filled by C165. Residue 217–218 (GD) coordinates substrate. Residues L267, 307–310 (GGPA), and A310 each bind CoA.

This sequence belongs to the thiolase-like superfamily. Chalcone/stilbene synthases family. In terms of assembly, homodimer.

The protein resides in the endoplasmic reticulum. It functions in the pathway secondary metabolite biosynthesis; flavonoid biosynthesis. In terms of biological role, plant type III polyketide synthases (PKSs) that catalyzes the condensation of malonyl-CoA units with various CoA ester starter molecules to generate a diverse array of natural products including long-chain alkyl alpha-pyrones. The polypeptide is Type III polyketide synthase C (Arabidopsis thaliana (Mouse-ear cress)).